We begin with the raw amino-acid sequence, 385 residues long: Endoglucanase 1 (385 aa).

The signal sequence occupies residues 1-17 (MKLVFSALASLLSGASA). N93 and N140 each carry an N-linked (GlcNAc...) asparagine glycan. Residue E176 is the Proton donor of the active site. N200 and N237 each carry an N-linked (GlcNAc...) asparagine glycan. E284 (nucleophile) is an active-site residue. N289 and N331 each carry an N-linked (GlcNAc...) asparagine glycan.

This sequence belongs to the glycosyl hydrolase 5 (cellulase A) family.

It catalyses the reaction Endohydrolysis of (1-&gt;4)-beta-D-glucosidic linkages in cellulose, lichenin and cereal beta-D-glucans.. It participates in glycan metabolism; cellulose degradation. Active towards carboxymethyl cellulose. The polypeptide is Endoglucanase 1 (eg 1) (Robillarda sp. (strain Y-20)).